We begin with the raw amino-acid sequence, 312 residues long: MLNSESLLRELRDALHEGGLTGSFLVRDLYTGEELGIDPDTELPTASLVKLPLALATLERIRLGEVDGAQQIEVAPGRITTPGPTGLSRFRHPARVAVDDLLYLSTSVSDGTASDALFEITPPAQVEQMVREWGFRDLTVRHSMRELSETPAERFESADAHLAHALAISAGTSGRGHRVPQLDVARANTGTARAFVDLLEALWAPVLTGPRPGRTSRALPPEPAARLRELMAANLLRHRLAPDFASDAATWSSKTGTLLNLRHEVGVVEHADGQVFAVAVLTESQVPADSQPGAEALMAQVARRLRDRLREW.

This is Beta-lactamase regulatory protein BlaB (blaB) from Streptomyces cacaoi.